Reading from the N-terminus, the 135-residue chain is Beta-galactoside-binding lectin (135 aa).

At Ser2 the chain carries N-acetylserine. Cys3 and Cys8 form a disulfide bridge. Residues 5–135 (GPVCTNLGLK…DFTLRSVSWE (131 aa)) enclose the Galectin domain. A beta-D-galactoside contacts are provided by residues 46-50 (HFNPR), His54, Asn63, 70-73 (WGTE), and 70-76 (WGTEQRE).

As to quaternary structure, homodimer; disulfide-linked. (Microbial infection) Interacts with newcastle disease virus protein HN; this interaction inhibits viral adsorption rather than internalization. As to expression, mainly in the intestine (adult), mainly in the skin (embryo).

This protein binds beta-galactoside. May participate in host antiviral defense through specific interaction with glycans on the viral envelope glycoproteins. This Gallus gallus (Chicken) protein is Beta-galactoside-binding lectin (CG-1B).